A 477-amino-acid chain; its full sequence is Bifunctional protein HldE (477 aa).

The tract at residues 1-318 is ribokinase; the sequence is MKVTLPEFER…ENAVRGRADT (318 aa). Lysine 179 is subject to N6-acetyllysine. ATP is bound at residue 195-198; the sequence is NLSE. The active site involves aspartate 264. The tract at residues 344–477 is cytidylyltransferase; the sequence is MTNGVFDILH…IKKIQLDKKG (134 aa).

In the N-terminal section; belongs to the carbohydrate kinase PfkB family. This sequence in the C-terminal section; belongs to the cytidylyltransferase family. As to quaternary structure, homodimer.

The catalysed reaction is D-glycero-beta-D-manno-heptose 7-phosphate + ATP = D-glycero-beta-D-manno-heptose 1,7-bisphosphate + ADP + H(+). It carries out the reaction D-glycero-beta-D-manno-heptose 1-phosphate + ATP + H(+) = ADP-D-glycero-beta-D-manno-heptose + diphosphate. It functions in the pathway nucleotide-sugar biosynthesis; ADP-L-glycero-beta-D-manno-heptose biosynthesis; ADP-L-glycero-beta-D-manno-heptose from D-glycero-beta-D-manno-heptose 7-phosphate: step 1/4. It participates in nucleotide-sugar biosynthesis; ADP-L-glycero-beta-D-manno-heptose biosynthesis; ADP-L-glycero-beta-D-manno-heptose from D-glycero-beta-D-manno-heptose 7-phosphate: step 3/4. In terms of biological role, catalyzes the phosphorylation of D-glycero-D-manno-heptose 7-phosphate at the C-1 position to selectively form D-glycero-beta-D-manno-heptose-1,7-bisphosphate. Catalyzes the ADP transfer from ATP to D-glycero-beta-D-manno-heptose 1-phosphate, yielding ADP-D-glycero-beta-D-manno-heptose. The polypeptide is Bifunctional protein HldE (Escherichia coli O81 (strain ED1a)).